Consider the following 572-residue polypeptide: AAA ATPase forming ring-shaped complexes (572 aa).

A compositionally biased stretch (low complexity) spans 1–18; it reads MTTASQQTSSHSTASSTS. The interval 1–30 is disordered; that stretch reads MTTASQQTSSHSTASSTSRKGNNNDATPSL. The stretch at 42 to 70 forms a coiled coil; it reads TRNAKLVEMLKASRDKLDALNEQIRALSD. 258–263 contacts ATP; it reads GCGKTL. The disordered stretch occupies residues 543-572; it reads VAHHNRKTTTETEATEPEGTDSGKGHTDAS. Basic and acidic residues predominate over residues 563–572; the sequence is DSGKGHTDAS.

The protein belongs to the AAA ATPase family. As to quaternary structure, homohexamer. Assembles into a hexameric ring structure.

The protein is AAA ATPase forming ring-shaped complexes of Corynebacterium kroppenstedtii (strain DSM 44385 / JCM 11950 / CIP 105744 / CCUG 35717).